Consider the following 44-residue polypeptide: pyr operon leader peptide (44 aa).

This is pyr operon leader peptide (pyrL) from Shigella flexneri.